The primary structure comprises 298 residues: Lipoyl synthase (298 aa).

Positions 43, 48, 54, 69, 73, 76, and 280 each coordinate [4Fe-4S] cluster. Residues 55–269 (FSSGTATFLI…AACGRGMGIP (215 aa)) form the Radical SAM core domain.

Belongs to the radical SAM superfamily. Lipoyl synthase family. [4Fe-4S] cluster is required as a cofactor.

The protein localises to the cytoplasm. It catalyses the reaction [[Fe-S] cluster scaffold protein carrying a second [4Fe-4S](2+) cluster] + N(6)-octanoyl-L-lysyl-[protein] + 2 oxidized [2Fe-2S]-[ferredoxin] + 2 S-adenosyl-L-methionine + 4 H(+) = [[Fe-S] cluster scaffold protein] + N(6)-[(R)-dihydrolipoyl]-L-lysyl-[protein] + 4 Fe(3+) + 2 hydrogen sulfide + 2 5'-deoxyadenosine + 2 L-methionine + 2 reduced [2Fe-2S]-[ferredoxin]. The protein operates within protein modification; protein lipoylation via endogenous pathway; protein N(6)-(lipoyl)lysine from octanoyl-[acyl-carrier-protein]: step 2/2. Its function is as follows. Catalyzes the radical-mediated insertion of two sulfur atoms into the C-6 and C-8 positions of the octanoyl moiety bound to the lipoyl domains of lipoate-dependent enzymes, thereby converting the octanoylated domains into lipoylated derivatives. The chain is Lipoyl synthase from Nitratidesulfovibrio vulgaris (strain DP4) (Desulfovibrio vulgaris).